The following is a 488-amino-acid chain: Glutamyl-tRNA(Gln) amidotransferase subunit A (488 aa).

Residues lysine 77 and serine 152 each act as charge relay system in the active site. Serine 176 serves as the catalytic Acyl-ester intermediate.

Belongs to the amidase family. GatA subfamily. In terms of assembly, heterotrimer of A, B and C subunits.

The enzyme catalyses L-glutamyl-tRNA(Gln) + L-glutamine + ATP + H2O = L-glutaminyl-tRNA(Gln) + L-glutamate + ADP + phosphate + H(+). Its function is as follows. Allows the formation of correctly charged Gln-tRNA(Gln) through the transamidation of misacylated Glu-tRNA(Gln) in organisms which lack glutaminyl-tRNA synthetase. The reaction takes place in the presence of glutamine and ATP through an activated gamma-phospho-Glu-tRNA(Gln). The polypeptide is Glutamyl-tRNA(Gln) amidotransferase subunit A (Streptococcus uberis (strain ATCC BAA-854 / 0140J)).